A 648-amino-acid chain; its full sequence is 1-deoxy-D-xylulose-5-phosphate synthase (648 aa).

Thiamine diphosphate contacts are provided by residues histidine 79 and 120–122 (GHA). Position 152 (aspartate 152) interacts with Mg(2+). Thiamine diphosphate is bound by residues 153–154 (GS), asparagine 181, phenylalanine 293, and glutamate 377. Asparagine 181 is a binding site for Mg(2+).

The protein belongs to the transketolase family. DXPS subfamily. As to quaternary structure, homodimer. The cofactor is Mg(2+). Requires thiamine diphosphate as cofactor.

The catalysed reaction is D-glyceraldehyde 3-phosphate + pyruvate + H(+) = 1-deoxy-D-xylulose 5-phosphate + CO2. It functions in the pathway metabolic intermediate biosynthesis; 1-deoxy-D-xylulose 5-phosphate biosynthesis; 1-deoxy-D-xylulose 5-phosphate from D-glyceraldehyde 3-phosphate and pyruvate: step 1/1. Catalyzes the acyloin condensation reaction between C atoms 2 and 3 of pyruvate and glyceraldehyde 3-phosphate to yield 1-deoxy-D-xylulose-5-phosphate (DXP). The sequence is that of 1-deoxy-D-xylulose-5-phosphate synthase from Bacteroides fragilis (strain ATCC 25285 / DSM 2151 / CCUG 4856 / JCM 11019 / LMG 10263 / NCTC 9343 / Onslow / VPI 2553 / EN-2).